The primary structure comprises 450 residues: Phosphoglucosamine mutase (450 aa).

Residue Ser101 is the Phosphoserine intermediate of the active site. Residues Ser101, Asp240, Asp242, and Asp244 each contribute to the Mg(2+) site. Residue Ser101 is modified to Phosphoserine.

This sequence belongs to the phosphohexose mutase family. It depends on Mg(2+) as a cofactor. Post-translationally, activated by phosphorylation.

The enzyme catalyses alpha-D-glucosamine 1-phosphate = D-glucosamine 6-phosphate. In terms of biological role, catalyzes the conversion of glucosamine-6-phosphate to glucosamine-1-phosphate. The chain is Phosphoglucosamine mutase from Streptococcus pneumoniae serotype 4 (strain ATCC BAA-334 / TIGR4).